Here is a 323-residue protein sequence, read N- to C-terminus: Aldo-keto reductase family 1 member C18 (323 aa).

Residues 20 to 24 (GFGTY) and Asp-50 contribute to the NADP(+) site. The active-site Proton donor is Tyr-55. Position 117 (His-117) interacts with substrate. NADP(+)-binding positions include 166–167 (SN), Gln-190, 216–221 (YGALGT), and 270–280 (KSFNEERIREN).

Belongs to the aldo/keto reductase family. In terms of assembly, monomer. In terms of processing, the N-terminus is blocked. As to expression, corpus luteum (large luteal cells).

The protein localises to the cytoplasm. It catalyses the reaction (17R,20S)-17,20-dihydroxypregn-4-en-3-one + NADP(+) = 17alpha-hydroxyprogesterone + NADPH + H(+). The enzyme catalyses (17R,20S)-17,20-dihydroxypregn-4-en-3-one + NAD(+) = 17alpha-hydroxyprogesterone + NADH + H(+). In terms of biological role, catalyzes the conversion of progesterone into 20-alpha-dihydroprogesterone (20 alpha-OHP). This Rattus norvegicus (Rat) protein is Aldo-keto reductase family 1 member C18 (Akr1c18).